Reading from the N-terminus, the 451-residue chain is Chromosomal replication initiator protein DnaA (451 aa).

The interval 1 to 73 (MNAHPKEIWE…IRSLQMVTSQ (73 aa)) is domain I, interacts with DnaA modulators. Residues 73-112 (QKYNVKFLISSELPEEFLTLDTINEQNIKGSIIVSDEMSA) are domain II. The segment at 113 to 329 (MLNPKYTFTS…GALIRIVAFS (217 aa)) is domain III, AAA+ region. Residues Gly-157, Gly-159, Lys-160, and Thr-161 each contribute to the ATP site. Residues 330-451 (SLTNKEISVD…NDLTKRLDQQ (122 aa)) are domain IV, binds dsDNA.

The protein belongs to the DnaA family. In terms of assembly, oligomerizes as a right-handed, spiral filament on DNA at oriC.

It localises to the cytoplasm. Plays an essential role in the initiation and regulation of chromosomal replication. ATP-DnaA binds to the origin of replication (oriC) to initiate formation of the DNA replication initiation complex once per cell cycle. Binds the DnaA box (a 9 base pair repeat at the origin) and separates the double-stranded (ds)DNA. Forms a right-handed helical filament on oriC DNA; dsDNA binds to the exterior of the filament while single-stranded (ss)DNA is stabiized in the filament's interior. The ATP-DnaA-oriC complex binds and stabilizes one strand of the AT-rich DNA unwinding element (DUE), permitting loading of DNA polymerase. After initiation quickly degrades to an ADP-DnaA complex that is not apt for DNA replication. Binds acidic phospholipids. This Clostridium kluyveri (strain NBRC 12016) protein is Chromosomal replication initiator protein DnaA.